A 528-amino-acid chain; its full sequence is MSKQILYQDDARKALEKGMDILTEAVSVTLGPKGRNVVLEKKFGAPQIVNDGVTIAKEISLEDHIENTGVALIRQAASKTNDVAGDGTTTATVLASAIVKQGMRNVAAGSNPMAIKKGIEKATNFVVSKIAEYAKPVEDTTAIVQVASISSGNDAEVGKMIADAIDRVGREGVISLEEGKSTSTSLEITEGMQFEKGFISPYFVTDLDRMEVLQENPFILFTDKKITLVQQELVPLLEQIAKTSKPLLIIAEDIEKEALATIVVNKLRGILNVVAVRAPGFGDRRKSLLEDMSILTGGQVITEDAGFSLDTVQLDMLGKARRVVVTKDSTTIIADGHEATVKSRCEQIKRQIETSDSLYEREKLQERLAKLSGGVAVIKVGAATETEMKDKKLRLEDAINATKAAIEEGIVPGGGSTNVHISGELFVWAKNNLFEDELIGALIVQRALTYPLRRIAFNAGDNGAVVVEKVKTNDFCIGYDASNGKIVNMYDAGIIDPAKVARSALQNATSIAAMVLTTECIVVDKLEA.

Residues 29–32 (TLGP), 86–90 (DGTTT), Gly414, and Asp496 contribute to the ATP site.

Belongs to the chaperonin (HSP60) family. Forms a cylinder of 14 subunits composed of two heptameric rings stacked back-to-back. Interacts with the co-chaperonin GroES.

It localises to the plastid. It is found in the chloroplast. The catalysed reaction is ATP + H2O + a folded polypeptide = ADP + phosphate + an unfolded polypeptide.. In terms of biological role, together with its co-chaperonin GroES, plays an essential role in assisting protein folding. The GroEL-GroES system forms a nano-cage that allows encapsulation of the non-native substrate proteins and provides a physical environment optimized to promote and accelerate protein folding. In Porphyra purpurea (Red seaweed), this protein is Chaperonin GroEL, chloroplastic.